A 226-amino-acid chain; its full sequence is Cytochrome c oxidase subunit 2 (226 aa).

Over 1 to 14 the chain is Mitochondrial intermembrane; the sequence is MAYPLQLGLQDATS. Residues 15–45 form a helical membrane-spanning segment; that stretch reads PIMEELTSFHDHTLMIVFLISTLVLYIISLM. Residues 46 to 59 are Mitochondrial matrix-facing; it reads LTTKLTHTSTMDAQ. The helical transmembrane segment at 60-87 threads the bilayer; sequence EIETIWTILPAIILIMIALPSLRVLYMM. At 88–226 the chain is on the mitochondrial intermembrane side; sequence DEINNPALTV…KYFEAWSASM (139 aa). Residues His-161, Cys-196, Glu-198, Cys-200, His-204, and Met-207 each contribute to the Cu cation site. Glu-198 lines the Mg(2+) pocket. Tyr-218 carries the post-translational modification Phosphotyrosine.

The protein belongs to the cytochrome c oxidase subunit 2 family. As to quaternary structure, component of the cytochrome c oxidase (complex IV, CIV), a multisubunit enzyme composed of 14 subunits. The complex is composed of a catalytic core of 3 subunits MT-CO1, MT-CO2 and MT-CO3, encoded in the mitochondrial DNA, and 11 supernumerary subunits COX4I, COX5A, COX5B, COX6A, COX6B, COX6C, COX7A, COX7B, COX7C, COX8 and NDUFA4, which are encoded in the nuclear genome. The complex exists as a monomer or a dimer and forms supercomplexes (SCs) in the inner mitochondrial membrane with NADH-ubiquinone oxidoreductase (complex I, CI) and ubiquinol-cytochrome c oxidoreductase (cytochrome b-c1 complex, complex III, CIII), resulting in different assemblies (supercomplex SCI(1)III(2)IV(1) and megacomplex MCI(2)III(2)IV(2)). Found in a complex with TMEM177, COA6, COX18, COX20, SCO1 and SCO2. Interacts with TMEM177 in a COX20-dependent manner. Interacts with COX20. Interacts with COX16. Cu cation is required as a cofactor.

It localises to the mitochondrion inner membrane. It carries out the reaction 4 Fe(II)-[cytochrome c] + O2 + 8 H(+)(in) = 4 Fe(III)-[cytochrome c] + 2 H2O + 4 H(+)(out). In terms of biological role, component of the cytochrome c oxidase, the last enzyme in the mitochondrial electron transport chain which drives oxidative phosphorylation. The respiratory chain contains 3 multisubunit complexes succinate dehydrogenase (complex II, CII), ubiquinol-cytochrome c oxidoreductase (cytochrome b-c1 complex, complex III, CIII) and cytochrome c oxidase (complex IV, CIV), that cooperate to transfer electrons derived from NADH and succinate to molecular oxygen, creating an electrochemical gradient over the inner membrane that drives transmembrane transport and the ATP synthase. Cytochrome c oxidase is the component of the respiratory chain that catalyzes the reduction of oxygen to water. Electrons originating from reduced cytochrome c in the intermembrane space (IMS) are transferred via the dinuclear copper A center (CU(A)) of subunit 2 and heme A of subunit 1 to the active site in subunit 1, a binuclear center (BNC) formed by heme A3 and copper B (CU(B)). The BNC reduces molecular oxygen to 2 water molecules using 4 electrons from cytochrome c in the IMS and 4 protons from the mitochondrial matrix. This Perognathus flavus (Silky pocket mouse) protein is Cytochrome c oxidase subunit 2 (MT-CO2).